We begin with the raw amino-acid sequence, 478 residues long: Argininosuccinate lyase (478 aa).

Belongs to the lyase 1 family. Argininosuccinate lyase subfamily.

Its subcellular location is the cytoplasm. The catalysed reaction is 2-(N(omega)-L-arginino)succinate = fumarate + L-arginine. The protein operates within amino-acid biosynthesis; L-arginine biosynthesis; L-arginine from L-ornithine and carbamoyl phosphate: step 3/3. This chain is Argininosuccinate lyase, found in Leptospira biflexa serovar Patoc (strain Patoc 1 / Ames).